A 129-amino-acid polypeptide reads, in one-letter code: Phosphoribosyl-AMP cyclohydrolase (129 aa).

Asp78 lines the Mg(2+) pocket. Zn(2+) is bound at residue Cys79. 2 residues coordinate Mg(2+): Asp80 and Asp82. Zn(2+)-binding residues include Cys96 and Cys103.

It belongs to the PRA-CH family. Homodimer. Mg(2+) serves as cofactor. It depends on Zn(2+) as a cofactor.

Its subcellular location is the cytoplasm. It carries out the reaction 1-(5-phospho-beta-D-ribosyl)-5'-AMP + H2O = 1-(5-phospho-beta-D-ribosyl)-5-[(5-phospho-beta-D-ribosylamino)methylideneamino]imidazole-4-carboxamide. Its pathway is amino-acid biosynthesis; L-histidine biosynthesis; L-histidine from 5-phospho-alpha-D-ribose 1-diphosphate: step 3/9. Its function is as follows. Catalyzes the hydrolysis of the adenine ring of phosphoribosyl-AMP. This Nitrosomonas europaea (strain ATCC 19718 / CIP 103999 / KCTC 2705 / NBRC 14298) protein is Phosphoribosyl-AMP cyclohydrolase.